The following is a 267-amino-acid chain: Cell cycle checkpoint protein RAD1 homolog mrt-2 (267 aa).

The protein belongs to the Rad1 family. In terms of assembly, probable component of the toroidal 9-1-1 (RAD9-RAD1-HUS1) complex, composed of hpr-9, mrt-2 and hus-1. Interacts with hus-1. Might associate with hpr-9.

Its subcellular location is the nucleus. It carries out the reaction Exonucleolytic cleavage in the 3'- to 5'-direction to yield nucleoside 5'-phosphates.. Functionally, may be a component of the 9-1-1 cell-cycle checkpoint response complex that plays a major role in DNA repair. Promotes DNA double strand break-induced cell cycle arrest and apoptosis, thereby playing a role in genome stability. Also required for telomere length maintenance and germline immortality. May possess 3'-&gt;5' double stranded DNA exonuclease activity. The polypeptide is Cell cycle checkpoint protein RAD1 homolog mrt-2 (Caenorhabditis elegans).